A 155-amino-acid polypeptide reads, in one-letter code: Ribosome maturation factor RimP (155 aa).

It belongs to the RimP family.

The protein localises to the cytoplasm. Its function is as follows. Required for maturation of 30S ribosomal subunits. The polypeptide is Ribosome maturation factor RimP (Staphylococcus epidermidis (strain ATCC 35984 / DSM 28319 / BCRC 17069 / CCUG 31568 / BM 3577 / RP62A)).